We begin with the raw amino-acid sequence, 318 residues long: Beta-galactosidase small subunit (318 aa).

The protein belongs to the bacterial beta-galactosidase small subunit family. As to quaternary structure, heterodimer of a large (LacL) and a small subunit (LacM).

It catalyses the reaction Hydrolysis of terminal non-reducing beta-D-galactose residues in beta-D-galactosides.. Functionally, component of a beta-galactosidase. The sequence is that of Beta-galactosidase small subunit from Lactobacillus helveticus (Lactobacillus suntoryeus).